The following is a 576-amino-acid chain: M-phase inducer phosphatase 2 (576 aa).

Residue S42 is modified to Phosphoserine. Residues R90–S105 are compositionally biased toward low complexity. The tract at residues R90–P119 is disordered. Position 167 is a phosphoserine; by MELK (S167). Residue S248 is modified to Phosphoserine. S321 is subject to Phosphoserine; by MELK and MAPK14. A disordered region spans residues Q338–Q358. A Phosphoserine; by AURKA modification is found at S351. The residue at position 372 (S372) is a Phosphoserine; by BRSK1 and MAPK14. Positions I427–E534 constitute a Rhodanese domain. The active site involves C483. S559 carries the phosphoserine modification.

The protein belongs to the MPI phosphatase family. As to quaternary structure, interacts with MAPK14 and 14-3-3 proteins. Post-translationally, phosphorylated by BRSK1 in vitro. Phosphorylated by CHEK1, which inhibits the activity of this protein. Phosphorylation at Ser-351 by AURKA might locally participate in the control of the onset of mitosis. Phosphorylation by MELK at Ser-167 promotes localization to the centrosome and the spindle poles during mitosis. Phosphorylation at Ser-321 and Ser-372 by MAPK14 is required for binding to 14-3-3 proteins. As to expression, expressed predominantly in spleen, lung, heart, brain, intestine, and muscle.

Its subcellular location is the cytoplasm. The protein localises to the cytoskeleton. The protein resides in the microtubule organizing center. It is found in the centrosome. It localises to the spindle pole. It carries out the reaction O-phospho-L-tyrosyl-[protein] + H2O = L-tyrosyl-[protein] + phosphate. With respect to regulation, stimulated by B-type cyclins. In terms of biological role, tyrosine protein phosphatase which functions as a dosage-dependent inducer of mitotic progression. Directly dephosphorylates CDK1 and stimulates its kinase activity. Required for G2/M phases of the cell cycle progression and abscission during cytokinesis in a ECT2-dependent manner. The three isoforms seem to have a different level of activity. The chain is M-phase inducer phosphatase 2 (Cdc25b) from Mus musculus (Mouse).